The chain runs to 378 residues: tRNA-specific 2-thiouridylase MnmA (378 aa).

Residues 6 to 13 (AMSGGVDS) and leucine 32 each bind ATP. The active-site Nucleophile is cysteine 101. An intrachain disulfide couples cysteine 101 to cysteine 199. ATP is bound at residue glycine 125. The interval 148–150 (KDQ) is interaction with tRNA. Residue cysteine 199 is the Cysteine persulfide intermediate of the active site.

It belongs to the MnmA/TRMU family.

It localises to the cytoplasm. It carries out the reaction S-sulfanyl-L-cysteinyl-[protein] + uridine(34) in tRNA + AH2 + ATP = 2-thiouridine(34) in tRNA + L-cysteinyl-[protein] + A + AMP + diphosphate + H(+). In terms of biological role, catalyzes the 2-thiolation of uridine at the wobble position (U34) of tRNA, leading to the formation of s(2)U34. This Micrococcus luteus (strain ATCC 4698 / DSM 20030 / JCM 1464 / CCM 169 / CCUG 5858 / IAM 1056 / NBRC 3333 / NCIMB 9278 / NCTC 2665 / VKM Ac-2230) (Micrococcus lysodeikticus) protein is tRNA-specific 2-thiouridylase MnmA.